The following is a 675-amino-acid chain: Envelope glycoprotein (675 aa).

Residues 1 to 34 (MACSTLPKSPKDKIDPRDLLIPLILFLSLKGARS) form the signal peptide. The tract at residues 35–270 (AAPGSSPHQV…RYQNLGPRVP (236 aa)) is receptor-binding domain (RBD). Topologically, residues 35–620 (AAPGSSPHQV…FNRSPWFTTL (586 aa)) are extracellular. An N-linked (GlcNAc...) asparagine; by host glycan is attached at Asn46. 5 cysteine pairs are disulfide-bonded: Cys80–Cys132, Cys106–Cys121, Cys107–Cys117, Cys155–Cys175, and Cys167–Cys180. Position 89 (His89) interacts with Zn(2+). Residue Asp120 participates in Zn(2+) binding. N-linked (GlcNAc...) asparagine; by host glycosylation occurs at Asn202. Cys212 and Cys218 are oxidised to a cystine. Residues 276–323 (VLADQLSLPRPNPLPKPAKSPPASNSTPTLISPSPTPTQPPPAGTGDR) are disordered. Positions 285-295 (RPNPLPKPAKS) are enriched in pro residues. Residues 296 to 308 (PPASNSTPTLISP) are compositionally biased toward low complexity. The segment covering 309 to 318 (SPTPTQPPPA) has biased composition (pro residues). Asn336 carries N-linked (GlcNAc...) asparagine; by host glycosylation. 6 cysteine pairs are disulfide-bonded: Cys346–Cys349, Cys346–Cys573, Cys376–Cys430, Cys395–Cys407, Cys437–Cys450, and Cys565–Cys572. A CXXC motif is present at residues 346 to 349 (CWLC). Asn368 and Asn375 each carry an N-linked (GlcNAc...) asparagine; by host glycan. N-linked (GlcNAc...) asparagine; by host glycosylation is found at Asn408 and Asn444. The segment at 482-502 (VSLTLALLLGGLTMGGIAAGV) is fusion peptide. Residues 513-547 (QQFQQLHAAVQDDLKEVEKSITNLEKSLTSLSEVV) are a coiled coil. Positions 548–564 (LQNRRGLDLLFLKEGGL) are immunosuppression. The short motif at 565 to 573 (CAALKEECC) is the CX6CC element. Residues 621-641 (ISTIMGPLIILLLILLFGPCI) traverse the membrane as a helical segment. Cys640 carries S-palmitoyl cysteine; by host lipidation. Residues 642–675 (LNRLVQFVKDRISVVQALVLTQQYHQLKPLEYEP) lie on the Cytoplasmic side of the membrane. The short motif at 665 to 668 (YHQL) is the YXXL motif; contains endocytosis signal element.

In terms of assembly, the mature envelope protein (Env) consists of a trimer of SU-TM heterodimers attached by a labile interchain disulfide bond. In terms of processing, specific enzymatic cleavages in vivo yield mature proteins. Envelope glycoproteins are synthesized as an inactive precursor that is N-glycosylated and processed likely by host cell furin or by a furin-like protease in the Golgi to yield the mature SU and TM proteins. The cleavage site between SU and TM requires the minimal sequence [KR]-X-[KR]-R. The R-peptide is released from the C-terminus of the cytoplasmic tail of the TM protein upon particle formation as a result of proteolytic cleavage by the viral protease. Cleavage of this peptide is required for TM to become fusogenic. Post-translationally, the CXXC motif is highly conserved across a broad range of retroviral envelope proteins. It is thought to participate in the formation of a labile disulfide bond possibly with the CX6CC motif present in the transmembrane protein. Isomerization of the intersubunit disulfide bond to an SU intrachain disulfide bond is thought to occur upon receptor recognition in order to allow membrane fusion. The transmembrane protein is palmitoylated. In terms of processing, the R-peptide is palmitoylated.

It localises to the virion membrane. The protein resides in the host cell membrane. In terms of biological role, the surface protein (SU) attaches the virus to the host cell by binding to its receptor. This interaction triggers the refolding of the transmembrane protein (TM) and is thought to activate its fusogenic potential by unmasking its fusion peptide. Fusion occurs at the host cell plasma membrane. Functionally, the transmembrane protein (TM) acts as a class I viral fusion protein. Under the current model, the protein has at least 3 conformational states: pre-fusion native state, pre-hairpin intermediate state, and post-fusion hairpin state. During viral and target cell membrane fusion, the coiled coil regions (heptad repeats) assume a trimer-of-hairpins structure, positioning the fusion peptide in close proximity to the C-terminal region of the ectodomain. The formation of this structure appears to drive apposition and subsequent fusion of viral and target cell membranes. Membranes fusion leads to delivery of the nucleocapsid into the cytoplasm. This Mus musculus (Mouse) protein is Envelope glycoprotein (env).